Consider the following 443-residue polypeptide: Large ribosomal subunit protein mL50 (443 aa).

The interval 121-145 (QPTRADAPEKIRDPNYEPATSGAGL) is disordered. Residues 126 to 135 (DAPEKIRDPN) are compositionally biased toward basic and acidic residues.

Belongs to the mitochondrion-specific ribosomal protein mL50 family. In terms of assembly, component of the mitochondrial large ribosomal subunit (mt-LSU). Mature N.crassa 74S mitochondrial ribosomes consist of a small (37S) and a large (54S) subunit. The 37S small subunit contains a 16S ribosomal RNA (16S mt-rRNA) and 32 different proteins. The 54S large subunit contains a 23S rRNA (23S mt-rRNA) and 42 different proteins.

It localises to the mitochondrion. Functionally, component of the mitochondrial ribosome (mitoribosome), a dedicated translation machinery responsible for the synthesis of mitochondrial genome-encoded proteins, including at least some of the essential transmembrane subunits of the mitochondrial respiratory chain. The mitoribosomes are attached to the mitochondrial inner membrane and translation products are cotranslationally integrated into the membrane. This chain is Large ribosomal subunit protein mL50 (mrpl13), found in Neurospora crassa (strain ATCC 24698 / 74-OR23-1A / CBS 708.71 / DSM 1257 / FGSC 987).